A 326-amino-acid chain; its full sequence is Ribose-phosphate pyrophosphokinase 4 (326 aa).

Mg(2+)-binding residues include Asp-140, His-142, His-151, and Asp-155.

This sequence belongs to the ribose-phosphate pyrophosphokinase family.

The protein resides in the cytoplasm. It catalyses the reaction D-ribose 5-phosphate + ATP = 5-phospho-alpha-D-ribose 1-diphosphate + AMP + H(+). It participates in metabolic intermediate biosynthesis; 5-phospho-alpha-D-ribose 1-diphosphate biosynthesis; 5-phospho-alpha-D-ribose 1-diphosphate from D-ribose 5-phosphate (route I): step 1/1. 5-phosphoribose 1-diphosphate synthase involved in nucleotide, histidine, and tryptophan biosynthesis. Active in heteromultimeric complexes with other 5-phosphoribose 1-diphosphate synthases (PRS2, PRS3, PRS4 and PRS5). This Saccharomyces cerevisiae (strain ATCC 204508 / S288c) (Baker's yeast) protein is Ribose-phosphate pyrophosphokinase 4 (PRS4).